Consider the following 54-residue polypeptide: UPF0391 membrane protein Daro_2080 (54 aa).

The next 2 membrane-spanning stretches (helical) occupy residues 5–25 (AIVF…GIAA) and 30–50 (IAKI…VMGF).

The protein belongs to the UPF0391 family.

It is found in the cell membrane. This chain is UPF0391 membrane protein Daro_2080, found in Dechloromonas aromatica (strain RCB).